We begin with the raw amino-acid sequence, 490 residues long: O-acetyltransferase PaAT-2 (490 aa).

Histidine 165 (proton acceptor) is an active-site residue.

The protein belongs to the plant acyltransferase family.

Its pathway is mycotoxin biosynthesis. O-acetyltransferase; part of the 2 gene clusters that mediate the biosynthesis of fusicoccins, diterpene glucosides that display phytohormone-like activity and function as potent activators of plasma membrane H(+)-ATPases in plants by modifying 14-3-3 proteins and cause the plant disease constriction canker. The first step in the pathway is performed by the fusicoccadiene synthase PaFS that possesses both prenyl transferase and terpene cyclase activity, converting isopentenyl diphosphate and dimethylallyl diphosphate into geranylgeranyl diphosphate (GGDP) and successively converting GGDP into fusicocca-2,10(14)-diene, a precursor for fusicoccin H. The second step is the oxidation at the C-8 position by the cytochrome P450 monooxygenase PaP450-2 to yield fusicocca-2,10(14)-diene-8-beta-ol. The cytochrome P450 monooxygenase PaP450-1 then catalyzes the hydroxylation at the C-16 position to produce fusicocca-2,10(14)-diene-8-beta,16-diol. The dioxygenase fc-dox then catalyzes the 16-oxydation of fusicocca-2,10(14)-diene-8-beta,16-diol to yield an aldehyde (8-beta-hydroxyfusicocca-1,10(14)-dien-16-al). The short-chain dehydrogenase/reductase fc-sdr catalyzes the reduction of the aldehyde to yield fusicocca-1,10(14)-diene-8-beta,16-diol. The next step is the hydroxylation at C-9 performed by the cytochrome P450 monooxygenase PaP450-3 that leads to fusicoccin H aglycon which is glycosylated to fusicoccin H by the O-glycosyltransferase PaGT. Hydroxylation at C-12 by the cytochrome P450 monooxygenase PaP450-4 leads then to the production of fusicoccin Q and is followed by methylation by the O-methyltransferase PaMT to yield fusicoccin P. Fusicoccin P is further converted to fusicoccin J via prenylation by the O-glucose prenyltransferase PaPT. Cytochrome P450 monooxygenase PaP450-5 then performs hydroxylation at C-19 to yield dideacetyl-fusicoccin A which is acetylated to 3'-O-deacetyl-fusicoccin A by the O-acetyltransferase PaAT-2. Finally, a another acetylation by the O-acetyltransferase PaAT-1 yields fusicoccin A. This Phomopsis amygdali (Fusicoccum amygdali) protein is O-acetyltransferase PaAT-2.